The sequence spans 421 residues: Esterase LipQ (421 aa).

Residues Ser249, Asp344, and His377 contribute to the active site.

This sequence belongs to the 'GDXG' lipolytic enzyme family.

It catalyses the reaction hexadecanoate ester + H2O = an aliphatic alcohol + hexadecanoate + H(+). Its function is as follows. Shows lipase activity. Is highly immunogenic and may play an important role in the virulence and pathogenesis of M.tuberculosis infection, by altering the balance of cytokines. Significantly down-regulates the expression level of pro-inflammatory cytokines (TNF-alpha and IFN-gamma) and up-regulates the level of anti-inflammatory cytokines such as IL-4 and IL-10 as compared to LPS stimulated macrophages. Also inhibits the expression of iNOS, TLR2 and transcription factor NF-kappa-B in LPS stimulated macrophages whereas the expression of TLR-4 remains unchanged. In Mycobacterium tuberculosis (strain ATCC 25618 / H37Rv), this protein is Esterase LipQ.